We begin with the raw amino-acid sequence, 1885 residues long: Chitin synthase 5 (1885 aa).

One can recognise a Myosin motor domain in the interval 1–789 (MATRGNVPAH…SIALTGSQAA (789 aa)). 99–106 (GESGSGKT) lines the ATP pocket. N-linked (GlcNAc...) asparagine glycans are attached at residues Asn-219 and Asn-429. Positions 601–649 (KPLRMPSVSRKKHDQLRRMASRRADRSPAPQEEEPLPGTEEAKVRRTKP) are disordered. Residues 609-621 (SRKKHDQLRRMAS) are compositionally biased toward basic residues. Residues 666 to 690 (LDNITKSLTAPNVNNYFVFCLKPND) form an actin-binding region. A glycan (N-linked (GlcNAc...) asparagine) is linked at Asn-668. A disordered region spans residues 794 to 817 (GDIGSPSRPDTPGHNPFSDSKARL). 2 helical membrane passes run 894-914 (WLAI…KWIG) and 929-949 (FAIN…IIVF). In terms of domain architecture, Cytochrome b5 heme-binding spans 957 to 1016 (QNVYSAAELSAHDGKGKHSAYVAIRGQVFDLGAFMPNHYPKIIPQSSLKKYAGVDATGLF). 2 N-linked (GlcNAc...) asparagine glycosylation sites follow: Asn-1043 and Asn-1068. A helical membrane pass occupies residues 1205–1225 (ILLAVSILLCSVIGFKFFAAL). 2 N-linked (GlcNAc...) asparagine glycosylation sites follow: Asn-1462 and Asn-1568. 3 helical membrane-spanning segments follow: residues 1599 to 1619 (LLST…IVLL), 1626 to 1646 (VPLT…IIFI), and 1653 to 1673 (MIGW…GLPL). Residues Asn-1759 and Asn-1790 are each glycosylated (N-linked (GlcNAc...) asparagine). One can recognise a DEK-C domain in the interval 1827–1882 (LPTDDMLLNEIRDILRTADLMTVTKKGIKQELERRFNVNLDMKRAYIGSATEAILS).

In the N-terminal section; belongs to the TRAFAC class myosin-kinesin ATPase superfamily. Myosin family. It in the C-terminal section; belongs to the chitin synthase family. Class V subfamily. Post-translationally, maximal activity requires trypsin activation, suggesting a zymogenic nature.

The protein resides in the cell membrane. Its subcellular location is the membrane. It carries out the reaction [(1-&gt;4)-N-acetyl-beta-D-glucosaminyl](n) + UDP-N-acetyl-alpha-D-glucosamine = [(1-&gt;4)-N-acetyl-beta-D-glucosaminyl](n+1) + UDP + H(+). Its function is as follows. Polymerizes chitin, a structural polymer of the cell wall and septum, by transferring the sugar moiety of UDP-GlcNAc to the non-reducing end of the growing chitin polymer. CHS5 is required for the sustained growth at 37 degrees Celsius and is of critical importance for virulence. Especially important at infection temperatures for maintaining the cell wall integrity of developing yeast buds, elongating tips of hyphae, and random sites of expansion in sclerotic forms. In Exophiala dermatitidis (Black yeast-like fungus), this protein is Chitin synthase 5.